Reading from the N-terminus, the 168-residue chain is G/U mismatch-specific DNA glycosylase (168 aa).

It belongs to the uracil-DNA glycosylase (UDG) superfamily. TDG/mug family. In terms of assembly, binds DNA as a monomer.

Its subcellular location is the cytoplasm. It catalyses the reaction Specifically hydrolyzes mismatched double-stranded DNA and polynucleotides, releasing free uracil.. Functionally, excises ethenocytosine and uracil, which can arise by alkylation or deamination of cytosine, respectively, from the corresponding mispairs with guanine in ds-DNA. It is capable of hydrolyzing the carbon-nitrogen bond between the sugar-phosphate backbone of the DNA and the mispaired base. The complementary strand guanine functions in substrate recognition. Required for DNA damage lesion repair in stationary-phase cells. The protein is G/U mismatch-specific DNA glycosylase of Escherichia coli O157:H7 (strain EC4115 / EHEC).